The chain runs to 97 residues: Protein transport protein SFT1 (97 aa).

Residues 1–74 are Cytoplasmic-facing; that stretch reads MSNSRYSQTE…RLTRSLKAGN (74 aa). The 63-residue stretch at 7-69 folds into the t-SNARE coiled-coil homology domain; the sequence is SQTESNNDRK…KNSSSRLTRS (63 aa). Residues 75–94 traverse the membrane as a helical; Anchor for type IV membrane protein segment; it reads SIWRMVGLALLIFFILYTLF. At 95–97 the chain is on the lumenal side; that stretch reads KLF.

In terms of assembly, component of a SNARE complex consisting of SED5, GOS1, YKT6 and SFT1.

Its subcellular location is the golgi apparatus membrane. In terms of biological role, vesicle SNARE required for retrograde transport within the Golgi complex. This is Protein transport protein SFT1 (SFT1) from Saccharomyces cerevisiae (strain ATCC 204508 / S288c) (Baker's yeast).